A 417-amino-acid polypeptide reads, in one-letter code: Valine--pyruvate aminotransferase (417 aa).

Lys-249 is subject to N6-(pyridoxal phosphate)lysine.

This sequence belongs to the class-I pyridoxal-phosphate-dependent aminotransferase family. As to quaternary structure, homodimer. It depends on pyridoxal 5'-phosphate as a cofactor.

It localises to the cytoplasm. It catalyses the reaction L-valine + pyruvate = 3-methyl-2-oxobutanoate + L-alanine. In terms of biological role, involved in the biosynthesis of alanine. In Escherichia coli (strain K12), this protein is Valine--pyruvate aminotransferase (avtA).